We begin with the raw amino-acid sequence, 580 residues long: Arginine--tRNA ligase (580 aa).

A 'HIGH' region motif is present at residues 131–141 (ANPTGPMHVGH).

This sequence belongs to the class-I aminoacyl-tRNA synthetase family. In terms of assembly, monomer.

It is found in the cytoplasm. The enzyme catalyses tRNA(Arg) + L-arginine + ATP = L-arginyl-tRNA(Arg) + AMP + diphosphate. This Cereibacter sphaeroides (strain ATCC 17023 / DSM 158 / JCM 6121 / CCUG 31486 / LMG 2827 / NBRC 12203 / NCIMB 8253 / ATH 2.4.1.) (Rhodobacter sphaeroides) protein is Arginine--tRNA ligase.